A 946-amino-acid polypeptide reads, in one-letter code: Protocadherin alpha-10 (946 aa).

Residues methionine 1 to glycine 30 form the signal peptide. 6 consecutive Cadherin domains span residues glutamine 31–phenylalanine 134, proline 135–phenylalanine 243, aspartate 244–isoleucine 351, isoleucine 352–phenylalanine 456, alanine 457–leucine 566, and valine 582–alanine 679. Residues glutamine 31–asparagine 697 lie on the Extracellular side of the membrane. A glycan (N-linked (GlcNAc...) asparagine) is linked at asparagine 258. Asparagine 549 carries N-linked (GlcNAc...) asparagine glycosylation. The helical transmembrane segment at valine 698–tyrosine 718 threads the bilayer. Topologically, residues threonine 719–glutamine 946 are cytoplasmic. PXXP repeat units lie at residues proline 734 to proline 737, proline 774 to proline 777, proline 795 to proline 798, proline 828 to proline 831, proline 869 to proline 872, and proline 887 to proline 890. The interval proline 734–proline 890 is 6 X 4 AA repeats of P-X-X-P. Disordered stretches follow at residues alanine 826–proline 852 and phenylalanine 865–glutamine 946. The segment covering aspartate 905 to lysine 919 has biased composition (basic and acidic residues).

It is found in the cell membrane. Its function is as follows. Potential calcium-dependent cell-adhesion protein. May be involved in the establishment and maintenance of specific neuronal connections in the brain. The polypeptide is Protocadherin alpha-10 (Mus musculus (Mouse)).